A 270-amino-acid chain; its full sequence is Glutamate racemase (270 aa).

Substrate-binding positions include 14 to 15 and 46 to 47; these read DS and YG. Cys77 functions as the Proton donor/acceptor in the catalytic mechanism. 78–79 contributes to the substrate binding site; the sequence is NT. The active-site Proton donor/acceptor is Cys189. Substrate is bound at residue 190–191; it reads TH.

The protein belongs to the aspartate/glutamate racemases family.

The enzyme catalyses L-glutamate = D-glutamate. The protein operates within cell wall biogenesis; peptidoglycan biosynthesis. In terms of biological role, provides the (R)-glutamate required for cell wall biosynthesis. In Neisseria gonorrhoeae (strain ATCC 700825 / FA 1090), this protein is Glutamate racemase.